The primary structure comprises 387 residues: Probable NADH-dependent butanol dehydrogenase 1 (387 aa).

The protein belongs to the iron-containing alcohol dehydrogenase family.

Its pathway is alcohol metabolism; butanol biosynthesis. The sequence is that of Probable NADH-dependent butanol dehydrogenase 1 (yugJ) from Bacillus subtilis (strain 168).